The sequence spans 247 residues: Sensory rhodopsin-1 (247 aa).

Residues Met1–Ala4 lie on the Extracellular side of the membrane. Residues Val5–Leu26 traverse the membrane as a helical segment. The Cytoplasmic portion of the chain corresponds to Tyr27–Asp35. The helical transmembrane segment at Arg36–Ala57 threads the bilayer. The Extracellular portion of the chain corresponds to Leu58–Val71. A helical transmembrane segment spans residues Gly72–Ala93. Topologically, residues Gly94–Ser96 are cytoplasmic. The helical transmembrane segment at Arg97–Val119 threads the bilayer. The Extracellular portion of the chain corresponds to Thr120–Thr123. A helical membrane pass occupies residues Leu124 to Val151. Residues Pro152–Asp154 are Cytoplasmic-facing. A helical transmembrane segment spans residues Pro155 to Gly182. Residues Pro183–Thr190 are Extracellular-facing. The chain crosses the membrane as a helical span at residues Gly191–Val223. The residue at position 206 (Lys206) is an N6-(retinylidene)lysine. Residues Val224–Asp247 lie on the Cytoplasmic side of the membrane.

The protein belongs to the archaeal/bacterial/fungal opsin family. Interacts with HTR-I.

It localises to the cell membrane. Functionally, involved in the control of phototaxis. Mediates both photoattractant (in the orange light) and photophobic (in the near UV light) responses. The signal is then transmitted to the sensory rhodopsin I transducer (HTR-I). This is Sensory rhodopsin-1 (sop1) from Halobacterium sp. (strain SG1).